A 321-amino-acid polypeptide reads, in one-letter code: MFHSLVLMACALAALSVAQGAGSARSKSLPLSLSLSVSVSSSLASASSPGAAADPTAAFTVTATAPTPASAPFAGKQLNRCRQSCYQQLSKDWHYCKDSVDCTNCCQKLVAPFELRILKAQRQESLVLTDIGWDEMIANASRQCLITWEVSGGGLIGNLLTDTARAELSLWPDTVYNIQVKCKHKLTGLMRRSIKLNVDTSQLVGTTTTTTTSKSSIQRQHLEQPVDHTDALEHSQHIRIPRPTDRVYIISALPTPSELGGVVYPAFGALAFFLALLVMFLFLRPQRKRFPLDADSADTATLIGRSSSSSRNSMDASTLHV.

A signal peptide spans 1-18; the sequence is MFHSLVLMACALAALSVA. Residues 19-261 are Extracellular-facing; sequence QGAGSARSKS…ALPTPSELGG (243 aa). The helical transmembrane segment at 262 to 282 threads the bilayer; the sequence is VVYPAFGALAFFLALLVMFLF. Topologically, residues 283 to 321 are cytoplasmic; the sequence is LRPQRKRFPLDADSADTATLIGRSSSSSRNSMDASTLHV.

The protein resides in the membrane. Functionally, involved in the normal targeting of ventral muscle, muscle 12, by motoneurons. May function as an axon guidance molecule involved in neuromuscular specificity. The chain is Transmembrane protein fend (fend) from Drosophila melanogaster (Fruit fly).